Here is a 265-residue protein sequence, read N- to C-terminus: Orotidine 5'-phosphate decarboxylase (265 aa).

Substrate is bound by residues Asp-37, 59-61, 91-100, Tyr-217, and Arg-235; these read KTH and DRKFADIGNT. Residue Lys-93 is the Proton donor of the active site.

Belongs to the OMP decarboxylase family.

It catalyses the reaction orotidine 5'-phosphate + H(+) = UMP + CO2. It functions in the pathway pyrimidine metabolism; UMP biosynthesis via de novo pathway; UMP from orotate: step 2/2. This Candida glabrata (strain ATCC 2001 / BCRC 20586 / JCM 3761 / NBRC 0622 / NRRL Y-65 / CBS 138) (Yeast) protein is Orotidine 5'-phosphate decarboxylase (URA3).